The chain runs to 401 residues: S-adenosylmethionine synthase (401 aa).

ATP is bound at residue 136-141 (GQGSVD).

The protein belongs to the AdoMet synthase 2 family. Requires Mg(2+) as cofactor.

The enzyme catalyses L-methionine + ATP + H2O = S-adenosyl-L-methionine + phosphate + diphosphate. It participates in amino-acid biosynthesis; S-adenosyl-L-methionine biosynthesis; S-adenosyl-L-methionine from L-methionine: step 1/1. Functionally, catalyzes the formation of S-adenosylmethionine from methionine and ATP. The chain is S-adenosylmethionine synthase (mat) from Pyrococcus horikoshii (strain ATCC 700860 / DSM 12428 / JCM 9974 / NBRC 100139 / OT-3).